A 114-amino-acid polypeptide reads, in one-letter code: Ribonuclease U2 (114 aa).

3 disulfides stabilise this stretch: Cys1/Cys54, Cys9/Cys113, and Cys55/Cys96. The Ca(2+) site is built by Asp29, Val30, Ala31, Asn32, Asp37, and Tyr39. 39–49 serves as a coordination point for substrate; it reads YPHQYYDEASE. His41 is an active-site residue. The active-site Proton acceptor is Glu62. Residue Arg85 coordinates substrate. The active-site Proton donor is His101. A substrate-binding site is contributed by 108-110; that stretch reads DGF.

This sequence belongs to the ribonuclease U2 family.

The enzyme catalyses [RNA] containing adenosine + H2O = an [RNA fragment]-3'-adenosine-3'-phosphate + a 5'-hydroxy-ribonucleotide-3'-[RNA fragment].. It catalyses the reaction [RNA] containing guanosine + H2O = an [RNA fragment]-3'-guanosine-3'-phosphate + a 5'-hydroxy-ribonucleotide-3'-[RNA fragment].. The sequence is that of Ribonuclease U2 (RNU2) from Ustilago sphaerogena (Smut fungus).